A 151-amino-acid polypeptide reads, in one-letter code: Multiprotein-bridging factor 1 (151 aa).

Disordered stretches follow at residues 1–29 and 78–98; these read MSDW…ARSQ and DPNV…SQKD. The interval 41 to 119 is essential for TBP-binding; sequence VVSVDKKYGS…VNDYEAARAI (79 aa). An HTH cro/C1-type domain is found at 85–139; the sequence is ISRARTDKKMSQKDLATKINEKPTVVNDYEAARAIPNQQVLSKLERALGVKLRGN. The span at 88-98 shows a compositional bias: basic and acidic residues; that stretch reads ARTDKKMSQKD. The H-T-H motif DNA-binding region spans 96 to 115; that stretch reads QKDLATKINEKPTVVNDYEA. Ser-143 is modified (phosphoserine).

The protein belongs to the MBF1 family. In terms of assembly, interacts with TBP and the transcription factor GCN4. Interacts with RPS3/us3.

It localises to the cytoplasm. It is found in the nucleus. Functionally, transcriptional coactivator that stimulates GCN4-dependent transcriptional activity by bridging the DNA-binding region of GCN4 and TBP (SPT15), thereby recruiting TBP to GCN4-bound promoters. Involved in induction of the ribosome quality control (RQC) pathway; a pathway that degrades nascent peptide chains during problematic translation. Required to prevent stalled ribosomes from frameshifting. This is Multiprotein-bridging factor 1 (MBF1) from Saccharomyces cerevisiae (strain ATCC 204508 / S288c) (Baker's yeast).